The sequence spans 217 residues: MMSLGLVGRKVGMTRIFTAEGDSIPVTVLDVSDNRVTQIKTVETDGYTAVQVAFGSRRASRVTKPLAGHLAKAGVEAGEILKEFRIDAAKAAELSNGAVVGADLFEVGQKVDVQGVSIGKGYAGTIKRYNFSSGRATHGNSRSHNVPGSIGMAQDPGRVFPGKRMTGHLGDVTVTVQNLEIARIDAERKLLLVKGAIPGAKGGKVFVTPAVKTKGAK.

Gln-154 bears the N5-methylglutamine mark.

It belongs to the universal ribosomal protein uL3 family. In terms of assembly, part of the 50S ribosomal subunit. Forms a cluster with proteins L14 and L19. Methylated by PrmB.

Its function is as follows. One of the primary rRNA binding proteins, it binds directly near the 3'-end of the 23S rRNA, where it nucleates assembly of the 50S subunit. The protein is Large ribosomal subunit protein uL3 of Burkholderia ambifaria (strain ATCC BAA-244 / DSM 16087 / CCUG 44356 / LMG 19182 / AMMD) (Burkholderia cepacia (strain AMMD)).